The following is a 522-amino-acid chain: Glucans biosynthesis protein G (522 aa).

Residues 1-33 (MPNNKFFVKSSKASLRWLGATVLLTLYALPSWA) form the signal peptide.

It belongs to the OpgD/OpgG family.

It localises to the periplasm. It participates in glycan metabolism; osmoregulated periplasmic glucan (OPG) biosynthesis. In terms of biological role, involved in the biosynthesis of osmoregulated periplasmic glucans (OPGs). This is Glucans biosynthesis protein G from Sodalis glossinidius (strain morsitans).